The primary structure comprises 856 residues: Bifunctional uridylyltransferase/uridylyl-removing enzyme (856 aa).

Positions 1 to 320 (MTLSAAPLQH…YCQVPRVTQH (320 aa)) are uridylyltransferase. The tract at residues 321–678 (ISEYFHAVNG…ARLADDHEGL (358 aa)) is uridylyl-removing. The 123-residue stretch at 439–561 (VDEHILMVVR…VRTPRRLAAL (123 aa)) folds into the HD domain. ACT domains lie at 679–760 (QVLI…LPPQ) and 788–856 (ILSI…ALRI).

It belongs to the GlnD family. It depends on Mg(2+) as a cofactor.

It catalyses the reaction [protein-PII]-L-tyrosine + UTP = [protein-PII]-uridylyl-L-tyrosine + diphosphate. The catalysed reaction is [protein-PII]-uridylyl-L-tyrosine + H2O = [protein-PII]-L-tyrosine + UMP + H(+). With respect to regulation, uridylyltransferase (UTase) activity is inhibited by glutamine, while glutamine activates uridylyl-removing (UR) activity. Functionally, modifies, by uridylylation and deuridylylation, the PII regulatory proteins (GlnB and homologs), in response to the nitrogen status of the cell that GlnD senses through the glutamine level. Under low glutamine levels, catalyzes the conversion of the PII proteins and UTP to PII-UMP and PPi, while under higher glutamine levels, GlnD hydrolyzes PII-UMP to PII and UMP (deuridylylation). Thus, controls uridylylation state and activity of the PII proteins, and plays an important role in the regulation of nitrogen assimilation and metabolism. This chain is Bifunctional uridylyltransferase/uridylyl-removing enzyme, found in Chromobacterium violaceum (strain ATCC 12472 / DSM 30191 / JCM 1249 / CCUG 213 / NBRC 12614 / NCIMB 9131 / NCTC 9757 / MK).